Consider the following 627-residue polypeptide: MKGQETRGFQSEVKQLLHLMIHSLYSNKEIFLRELISNASDAADKLRFRALSTPELYAGDGDLRVRVSTDKEKRTLTISDNGIGMSRDEVIDNLGTIAKSGTKSFLESMGSDQVKDSQLIGQFGVGFYSAFIVADKVTVRTRAAGANADQGVYWESAGEGDYTIADITKDDRGTEITLHLREGEDEFLDDWRVRSVISKYSDHIALPVEIESQTESEEEGGESTVSWEKINKAQALWTRSKSEVSDDEYNEFYKHISHDFTDPLSWSHNRVEGKQEYTSLLYIPAHAPWDMWNRDHKHGLKLYVQRVFIMDDAEQFMPNYLRFVRGLIDSNDLPLNVSREILQDSRVTQNLRNALTKRVLQMLDKLAKDDAEKYQTFWQQFGLVLKEGPAEDGSNREAIAKLLRFATTQSDSSAQTVSLEDYVSRMVEGQDKIYYITADSYAAAKSSPHLELFRKKGIEVLLLSERIDEWMMSYLTEFDGKSFQSVSKADDTLDKLADEENDAQKEAQKALEPFVERVKTLLGERVKDVRFTYRLTDTPAIVVTDADEMSTQMAKLFAAAGQQAPEVKYIFELNPEHALIKRAADVSDEAEFGEWVELLLDQALLAERGTLDDPNLFIRRMNQLLSA.

The interval Met-1–Arg-339 is a; substrate-binding. Residues Glu-340–Lys-555 are b. The interval Leu-556–Ala-627 is c.

This sequence belongs to the heat shock protein 90 family. As to quaternary structure, homodimer.

Its subcellular location is the cytoplasm. Functionally, molecular chaperone. Has ATPase activity. In Pectobacterium atrosepticum (strain SCRI 1043 / ATCC BAA-672) (Erwinia carotovora subsp. atroseptica), this protein is Chaperone protein HtpG.